The sequence spans 105 residues: Multidrug resistance protein EbrA (105 aa).

Transmembrane regions (helical) follow at residues L2 to L22, A35 to I55, L57 to V77, and L84 to W104.

Belongs to the drug/metabolite transporter (DMT) superfamily. Small multidrug resistance (SMR) (TC 2.A.7.1) family. EbrA/EbrB subfamily. The efflux pump is composed of EbrA and EbrB.

Its subcellular location is the cell membrane. Its function is as follows. Part of a multidrug efflux pump. Confers resistance to cationic lipophilic dyes such as ethidium bromide, acriflavine, pyronine Y and safranin O. The efflux is probably coupled to an influx of protons. This is Multidrug resistance protein EbrA (ebrA) from Bacillus atrophaeus.